Consider the following 381-residue polypeptide: Penicillin-binding protein 4 (381 aa).

The Acyl-ester intermediate role is filled by serine 60. Residues 271-291 form a helical membrane-spanning segment; the sequence is VAGCLDTWSFMATGWGHGWAL. 299-308 is a binding site for NAD(+); sequence GYGHDGASGG. Residues 315 to 340 form a helical membrane-spanning segment; the sequence is VVPGSGVVAALLTNGGVATSFFTDLF.

The protein belongs to the beta-lactamase family.

The protein resides in the cell membrane. Functionally, involved in cell wall biosynthesis and may also act as a sensor of external penicillins. The polypeptide is Penicillin-binding protein 4 (pbp) (Amycolatopsis lactamdurans (Nocardia lactamdurans)).